The primary structure comprises 375 residues: Chaperone protein DnaJ (375 aa).

The J domain maps to 5–70 (DYYEVLEISR…QKRQAYDRFG (66 aa)). A CR-type zinc finger spans residues 133–211 (GKEVTIQIPS…CHGHGRVRRN (79 aa)). C146, C149, C163, C166, C185, C188, C199, and C202 together coordinate Zn(2+). 4 CXXCXGXG motif repeats span residues 146–153 (CEVCRGSG), 163–170 (CATCGGRG), 185–192 (CPQCNGSG), and 199–206 (CTNCHGHG).

The protein belongs to the DnaJ family. As to quaternary structure, homodimer. Requires Zn(2+) as cofactor.

The protein resides in the cytoplasm. Functionally, participates actively in the response to hyperosmotic and heat shock by preventing the aggregation of stress-denatured proteins and by disaggregating proteins, also in an autonomous, DnaK-independent fashion. Unfolded proteins bind initially to DnaJ; upon interaction with the DnaJ-bound protein, DnaK hydrolyzes its bound ATP, resulting in the formation of a stable complex. GrpE releases ADP from DnaK; ATP binding to DnaK triggers the release of the substrate protein, thus completing the reaction cycle. Several rounds of ATP-dependent interactions between DnaJ, DnaK and GrpE are required for fully efficient folding. Also involved, together with DnaK and GrpE, in the DNA replication of plasmids through activation of initiation proteins. The protein is Chaperone protein DnaJ of Acidithiobacillus ferrooxidans (strain ATCC 23270 / DSM 14882 / CIP 104768 / NCIMB 8455) (Ferrobacillus ferrooxidans (strain ATCC 23270)).